The primary structure comprises 437 residues: 3-phosphoshikimate 1-carboxyvinyltransferase (437 aa).

Residues Lys22, Ser23, and Arg27 each contribute to the 3-phosphoshikimate site. Lys22 lines the phosphoenolpyruvate pocket. The phosphoenolpyruvate site is built by Gly94 and Arg122. 4 residues coordinate 3-phosphoshikimate: Ser167, Gln169, Asp314, and Lys341. A phosphoenolpyruvate-binding site is contributed by Gln169. Catalysis depends on Asp314, which acts as the Proton acceptor. Arg345 and Arg389 together coordinate phosphoenolpyruvate.

It belongs to the EPSP synthase family. Monomer.

It localises to the cytoplasm. It catalyses the reaction 3-phosphoshikimate + phosphoenolpyruvate = 5-O-(1-carboxyvinyl)-3-phosphoshikimate + phosphate. It functions in the pathway metabolic intermediate biosynthesis; chorismate biosynthesis; chorismate from D-erythrose 4-phosphate and phosphoenolpyruvate: step 6/7. In terms of biological role, catalyzes the transfer of the enolpyruvyl moiety of phosphoenolpyruvate (PEP) to the 5-hydroxyl of shikimate-3-phosphate (S3P) to produce enolpyruvyl shikimate-3-phosphate and inorganic phosphate. The sequence is that of 3-phosphoshikimate 1-carboxyvinyltransferase from Oenococcus oeni (strain ATCC BAA-331 / PSU-1).